The sequence spans 540 residues: CTP synthase (540 aa).

The tract at residues 1 to 273 (MNNKDLKTKF…DDFILQHFKL (273 aa)) is amidoligase domain. Ser-19 contacts CTP. Ser-19 serves as a coordination point for UTP. An ATP-binding site is contributed by 20-25 (SLGKGI). An L-glutamine-binding site is contributed by Tyr-60. Residue Asp-77 participates in ATP binding. Residues Asp-77 and Glu-147 each contribute to the Mg(2+) site. CTP contacts are provided by residues 154 to 156 (DIE), 194 to 199 (KTKPTQ), and Lys-230. Residues 194 to 199 (KTKPTQ) and Lys-230 each bind UTP. In terms of domain architecture, Glutamine amidotransferase type-1 spans 306-539 (YIVLHDAYLS…VEASLLNQKN (234 aa)). Residue Gly-361 participates in L-glutamine binding. Cys-388 acts as the Nucleophile; for glutamine hydrolysis in catalysis. L-glutamine is bound by residues 389 to 392 (LGMQ), Glu-412, and Arg-466. Active-site residues include His-512 and Glu-514.

It belongs to the CTP synthase family. As to quaternary structure, homotetramer.

The catalysed reaction is UTP + L-glutamine + ATP + H2O = CTP + L-glutamate + ADP + phosphate + 2 H(+). It catalyses the reaction L-glutamine + H2O = L-glutamate + NH4(+). The enzyme catalyses UTP + NH4(+) + ATP = CTP + ADP + phosphate + 2 H(+). Its pathway is pyrimidine metabolism; CTP biosynthesis via de novo pathway; CTP from UDP: step 2/2. Its activity is regulated as follows. Allosterically activated by GTP, when glutamine is the substrate; GTP has no effect on the reaction when ammonia is the substrate. The allosteric effector GTP functions by stabilizing the protein conformation that binds the tetrahedral intermediate(s) formed during glutamine hydrolysis. Inhibited by the product CTP, via allosteric rather than competitive inhibition. Its function is as follows. Catalyzes the ATP-dependent amination of UTP to CTP with either L-glutamine or ammonia as the source of nitrogen. Regulates intracellular CTP levels through interactions with the four ribonucleotide triphosphates. This chain is CTP synthase, found in Onion yellows phytoplasma (strain OY-M).